The following is a 286-amino-acid chain: Myb family transcription factor PHL7 (286 aa).

The HTH myb-type domain maps to 12–72; the sequence is HASKQRLRWT…HLQKYRLAKY (61 aa). A DNA-binding region (H-T-H motif) is located at residues 43 to 68; it reads PKGVLRVMGVQGLTIYHVKSHLQKYR. The tract at residues 74–97 is disordered; it reads PDSSSEGKKTDKKESGDMLSGLDG. The segment covering 78–89 has biased composition (basic and acidic residues); the sequence is SEGKKTDKKESG. The stretch at 104–124 forms a coiled coil; that stretch reads TEALKLQMEVQKRLHEQLEVQ. The short motif at 117–122 is the LHEQLE element; that stretch reads LHEQLE. Residues 152 to 227 form a disordered region; sequence LGEPSAPVTG…TGEERLSKKP (76 aa).

This sequence belongs to the MYB-CC family.

The protein localises to the nucleus. This is Myb family transcription factor PHL7 from Arabidopsis thaliana (Mouse-ear cress).